Consider the following 207-residue polypeptide: NADH-quinone oxidoreductase subunit C (207 aa).

Belongs to the complex I 30 kDa subunit family. As to quaternary structure, NDH-1 is composed of 14 different subunits. Subunits NuoB, C, D, E, F, and G constitute the peripheral sector of the complex.

The protein resides in the cell inner membrane. It catalyses the reaction a quinone + NADH + 5 H(+)(in) = a quinol + NAD(+) + 4 H(+)(out). Its function is as follows. NDH-1 shuttles electrons from NADH, via FMN and iron-sulfur (Fe-S) centers, to quinones in the respiratory chain. The immediate electron acceptor for the enzyme in this species is believed to be ubiquinone. Couples the redox reaction to proton translocation (for every two electrons transferred, four hydrogen ions are translocated across the cytoplasmic membrane), and thus conserves the redox energy in a proton gradient. The sequence is that of NADH-quinone oxidoreductase subunit C from Bordetella pertussis (strain Tohama I / ATCC BAA-589 / NCTC 13251).